The chain runs to 1340 residues: Pleckstrin homology domain-containing family G member 2 (1340 aa).

Residues 34–44 show a composition bias toward polar residues; that stretch reads TPTAQAATTMA. A disordered region spans residues 34-76; it reads TPTAQAATTMASPRGSGSSTSLSTVGSEGDPSPACSASRPEPL. Positions 45 to 62 are enriched in low complexity; sequence SPRGSGSSTSLSTVGSEG. One can recognise a DH domain in the interval 98–279; it reads RLERVAREIV…TAVAWYINDM (182 aa). In terms of domain architecture, PH spans 309-407; the sequence is ELVLEGTFRG…WIHCLQRLFF (99 aa). Disordered regions lie at residues 431–623, 684–743, 820–855, 907–979, 991–1028, 1047–1069, and 1125–1146; these read PKSK…IPCI, LPGP…SVQG, MQRA…EAEP, NVSD…PSAG, TTSL…EQRD, PVCT…STDF, and PLSS…SLTD. Thr441 bears the Phosphothreonine mark. Residues Ser446 and Ser465 each carry the phosphoserine modification. A compositionally biased stretch (basic and acidic residues) spans 560-572; that stretch reads DIPKFPRDSRVPV. Acidic residues predominate over residues 588–600; sequence SEEEEEEDLETDE. Composition is skewed to polar residues over residues 703-714, 820-831, 907-921, 930-945, and 956-972; these read SGSNPGRLSESP, MQRAETRASTNA, NVSD…SSNS, GQSN…TSLL, and PTAS…SQVP. A compositionally biased stretch (polar residues) spans 1049–1059; the sequence is CTSSPDQQIPA. Thr1215 bears the Phosphothreonine mark. Phosphoserine is present on residues Ser1219 and Ser1269. Residues 1250–1340 are disordered; it reads RRQGPGGEGT…VGPSQGPGGS (91 aa). The segment covering 1276–1288 has biased composition (pro residues); that stretch reads PSPPPQPQPPAPP. The segment covering 1319-1333 has biased composition (low complexity); the sequence is HPALLAAPHPGAVGP.

As to expression, expressed in thymus, skeletal muscle, lung, testis, uterus, pancreas and heart and also expressed during embryogenesis.

Its function is as follows. May be a transforming oncogene with exchange activity for CDC42. May be a guanine-nucleotide exchange factor (GEF) for RAC1 and CDC42. Activated by the binding to subunits beta and gamma of the heterotrimeric guanine nucleotide-binding protein (G protein). Involved in the regulation of actin polymerization. In Mus musculus (Mouse), this protein is Pleckstrin homology domain-containing family G member 2 (Plekhg2).